A 1300-amino-acid polypeptide reads, in one-letter code: DNA-directed RNA polymerase subunit beta (1300 aa).

It belongs to the RNA polymerase beta chain family. The RNAP catalytic core consists of 2 alpha, 1 beta, 1 beta' and 1 omega subunit. When a sigma factor is associated with the core the holoenzyme is formed, which can initiate transcription.

It carries out the reaction RNA(n) + a ribonucleoside 5'-triphosphate = RNA(n+1) + diphosphate. In terms of biological role, DNA-dependent RNA polymerase catalyzes the transcription of DNA into RNA using the four ribonucleoside triphosphates as substrates. The polypeptide is DNA-directed RNA polymerase subunit beta (Chlorobium chlorochromatii (strain CaD3)).